The chain runs to 592 residues: Alpha-1,3-galactosidase B (592 aa).

An N-terminal signal peptide occupies residues 1 to 14; it reads MKLLSVLSLSLVLS. Cys15 carries the N-palmitoyl cysteine lipid modification. Cys15 carries S-diacylglycerol cysteine lipidation. 3 PbH1 repeats span residues 429–451, 452–474, and 485–538; these read TPEVLFSGNVIRNNRARGSLFST, PRKTIVENNLFDHTSGAAILLCG, and CRHV…VIED.

It belongs to the glycosyl hydrolase 110 family. B subfamily.

It is found in the cell membrane. It carries out the reaction Hydrolysis of terminal, non-reducing branched (1-&gt;3)-alpha-D-galactosidic residues, producing free D-galactose.. It catalyses the reaction Hydrolysis of terminal, non-reducing linear (1-&gt;3)-alpha-D-galactosidic residues, producing free D-galactose.. The enzyme catalyses Hydrolysis of terminal, non-reducing alpha-D-galactose residues in alpha-D-galactosides, including galactose oligosaccharides, galactomannans and galactolipids.. Its function is as follows. Alpha-galactosidase. Removes both branched alpha-1,3-linked galactose residues of blood group B antigens and linear alpha-1,3-linked galactose structures. In Phocaeicola vulgatus (strain ATCC 8482 / DSM 1447 / JCM 5826 / CCUG 4940 / NBRC 14291 / NCTC 11154) (Bacteroides vulgatus), this protein is Alpha-1,3-galactosidase B (glaB1).